The sequence spans 22 residues: Magnificalysin II (22 aa).

The plays an important role in the hemolytic activity stretch occupies residues 3-12; the sequence is ALAGTIIDGA. The segment at 11–22 is N-terminal region; that stretch reads GASLGFDILNKV.

The protein belongs to the actinoporin family. Sea anemone subfamily. In terms of assembly, octamer or nonamer in membranes. Monomer in the soluble state.

It is found in the secreted. It localises to the nematocyst. Its subcellular location is the target cell membrane. Functionally, pore-forming protein that forms cations-selective hydrophilic pores of around 1 nm and causes cytolysis. Pore formation is a multi-step process that involves specific recognition of membrane sphingomyelin (but neither cholesterol nor phosphatidylcholine) using aromatic rich region and adjacent phosphocholine (POC) binding site, firm binding to the membrane (mainly driven by hydrophobic interactions) accompanied by the transfer of the N-terminal region to the lipid-water interface and finally pore formation after oligomerization of monomers. The sequence is that of Magnificalysin II from Heteractis magnifica (Magnificent sea anemone).